A 148-amino-acid polypeptide reads, in one-letter code: SsrA-binding protein (148 aa).

The span at 129 to 142 (ETEKKRDWEREKAR) shows a compositional bias: basic and acidic residues. Residues 129 to 148 (ETEKKRDWEREKARIMRAGT) are disordered.

It belongs to the SmpB family.

It localises to the cytoplasm. Functionally, required for rescue of stalled ribosomes mediated by trans-translation. Binds to transfer-messenger RNA (tmRNA), required for stable association of tmRNA with ribosomes. tmRNA and SmpB together mimic tRNA shape, replacing the anticodon stem-loop with SmpB. tmRNA is encoded by the ssrA gene; the 2 termini fold to resemble tRNA(Ala) and it encodes a 'tag peptide', a short internal open reading frame. During trans-translation Ala-aminoacylated tmRNA acts like a tRNA, entering the A-site of stalled ribosomes, displacing the stalled mRNA. The ribosome then switches to translate the ORF on the tmRNA; the nascent peptide is terminated with the 'tag peptide' encoded by the tmRNA and targeted for degradation. The ribosome is freed to recommence translation, which seems to be the essential function of trans-translation. This chain is SsrA-binding protein, found in Burkholderia orbicola (strain AU 1054).